The chain runs to 514 residues: Sugar transport protein 4 (514 aa).

The Cytoplasmic segment spans residues 1-22 (MAGGFVSQTPGVRNYNYKLTPK). The next 12 helical transmembrane spans lie at 23-43 (VFVTCFIGAFGGLIFGYDLGI), 80-100 (LLTLFTSSLYVAALVSSLFAS), 117-137 (FTFFIGSAFNGFAQNIAMLLI), 140-160 (ILLGFGVGFANQSVPVYLSEM), 172-192 (GFQVAIIFGIVVATIINYFTA), 202-222 (ISLGLACVPAVMIMIGALILP), 283-303 (LIMTCFIPFFQQLTGINVITF), 321-341 (LSAMVTGIIELLCTFVSVFTV), 348-368 (ILFLQGGIQMLVSQIAIGAMI), 387-407 (LIVALICIYVAGFAWSWGPLG), 426-446 (INVSVNMFFTFLVAQLFLTML), and 451-471 (FGLFFFFAFFVVIMTIFIYLM). Topologically, residues 472-514 (LPETKNVPIEEMNRVWKAHWFWGKFIPDEAVNMGAAEMQQKSV) are cytoplasmic.

Belongs to the major facilitator superfamily. Sugar transporter (TC 2.A.1.1) family. Mostly in flowers and roots, especially in anthers, including pollen, and root tips. Also present in some hydathodes.

The protein localises to the cell membrane. Functionally, mediates an active uptake of hexoses, probably by sugar/hydrogen symport. Can transport glucose, methylglucose, galactose, xylose and mannose, but not fructose. This Arabidopsis thaliana (Mouse-ear cress) protein is Sugar transport protein 4 (STP4).